We begin with the raw amino-acid sequence, 458 residues long: MTHEKLWGGRFSEPTDKFVEEFTASIDFDKRLYHQDIRGSIAHARMLGKQGIIPMEDVEKITAGLQEILRQIQGGQFKFSVALEDIHMNIEARLSEKIGEAGKRLHTGRSRNDQVALDIRLYLRDEIVEVSAYLDLLVDSLISQAEKNLGVIMPGYTHLQTAQPILFSHHMMAYVEMFSRDKGRMEDCLRRMNVLPLGAGALAGTTFPIDREHVAEILDFPEVTRNSLDSVSDRDFALEFMAASSILMMHLSRFSEELILWSTSEFKFVDLSDSFCTGSSIMPQKKNPDVPELVRGKTGRVYGNLMALLTVMKALPLAYNKDMQEDKEPLFDTIDTVKGSLKIFADMVGEMRINTGNMRAAAAKGFSTATDVADYLVRKGMPFRDAHEVVGKTVAYCLSNGKDLPDLTLGEWQGFSDKIGEDIFGCITLEASVNARSATGGTALERVKAEIARVKAGR.

The protein belongs to the lyase 1 family. Argininosuccinate lyase subfamily.

It is found in the cytoplasm. The catalysed reaction is 2-(N(omega)-L-arginino)succinate = fumarate + L-arginine. It functions in the pathway amino-acid biosynthesis; L-arginine biosynthesis; L-arginine from L-ornithine and carbamoyl phosphate: step 3/3. This is Argininosuccinate lyase from Geobacter metallireducens (strain ATCC 53774 / DSM 7210 / GS-15).